Consider the following 154-residue polypeptide: MYKLQLLSCIALTLALVANSAPTLSSTKDTKKQLEPLLLDLQFLLKEVNNYENLKLSRMLTFKFYMPKKATELKHLQCLMEELKPLEEVLNLAQSKNSHLTNIKDSMNNINLTVSELKGSETGFTCEYDDETVTVVEFLNKWITFCQSIYSTMT.

The first 20 residues, 1 to 20, serve as a signal peptide directing secretion; sequence MYKLQLLSCIALTLALVANS. T23 is a glycosylation site (O-linked (GalNAc...) threonine). C78 and C126 are disulfide-bonded.

The protein belongs to the IL-2 family.

It is found in the secreted. Cytokine produced by activated CD4-positive helper T-cells and to a lesser extend activated CD8-positive T-cells and natural killer (NK) cells that plays pivotal roles in the immune response and tolerance. Binds to a receptor complex composed of either the high-affinity trimeric IL-2R (IL2RA/CD25, IL2RB/CD122 and IL2RG/CD132) or the low-affinity dimeric IL-2R (IL2RB and IL2RG). Interaction with the receptor leads to oligomerization and conformation changes in the IL-2R subunits resulting in downstream signaling starting with phosphorylation of JAK1 and JAK3. In turn, JAK1 and JAK3 phosphorylate the receptor to form a docking site leading to the phosphorylation of several substrates including STAT5. This process leads to activation of several pathways including STAT, phosphoinositide-3-kinase/PI3K and mitogen-activated protein kinase/MAPK pathways. Functions as a T-cell growth factor and can increase NK-cell cytolytic activity as well. Promotes strong proliferation of activated B-cells and subsequently immunoglobulin production. Plays a pivotal role in regulating the adaptive immune system by controlling the survival and proliferation of regulatory T-cells, which are required for the maintenance of immune tolerance. Moreover, participates in the differentiation and homeostasis of effector T-cell subsets, including Th1, Th2, Th17 as well as memory CD8-positive T-cells. The protein is Interleukin-2 (IL2) of Lama glama (Llama).